The primary structure comprises 167 residues: Ubiquitin-fold modifier-conjugating enzyme 1 (167 aa).

Cys-116 functions as the Glycyl thioester intermediate in the catalytic mechanism.

Belongs to the ubiquitin-conjugating enzyme family. UFC1 subfamily.

E2-like enzyme which forms an intermediate with UFM1 via a thioester linkage. This is Ubiquitin-fold modifier-conjugating enzyme 1 from Anopheles gambiae (African malaria mosquito).